The following is a 119-amino-acid chain: Non-specific lipid-transfer protein 11 (119 aa).

A signal peptide spans 1–28 (MRNITTTTRKMLLLVITILLGIAYHGEA). 4 cysteine pairs are disulfide-bonded: Cys-31–Cys-78, Cys-41–Cys-55, Cys-56–Cys-101, and Cys-76–Cys-115.

Belongs to the plant LTP family.

Its function is as follows. Plant non-specific lipid-transfer proteins transfer phospholipids as well as galactolipids across membranes. May play a role in wax or cutin deposition in the cell walls of expanding epidermal cells and certain secretory tissues. The polypeptide is Non-specific lipid-transfer protein 11 (LTP11) (Arabidopsis thaliana (Mouse-ear cress)).